We begin with the raw amino-acid sequence, 458 residues long: Exodeoxyribonuclease 7 large subunit (458 aa).

The protein belongs to the XseA family. In terms of assembly, heterooligomer composed of large and small subunits.

It localises to the cytoplasm. The enzyme catalyses Exonucleolytic cleavage in either 5'- to 3'- or 3'- to 5'-direction to yield nucleoside 5'-phosphates.. Bidirectionally degrades single-stranded DNA into large acid-insoluble oligonucleotides, which are then degraded further into small acid-soluble oligonucleotides. The protein is Exodeoxyribonuclease 7 large subunit of Halalkalibacterium halodurans (strain ATCC BAA-125 / DSM 18197 / FERM 7344 / JCM 9153 / C-125) (Bacillus halodurans).